Here is a 492-residue protein sequence, read N- to C-terminus: Cytochrome P450 2A1 (492 aa).

The residue at position 130 (S130) is a Phosphoserine. Residue C437 participates in heme binding.

This sequence belongs to the cytochrome P450 family. Heme serves as cofactor. As to expression, liver and testis.

Its subcellular location is the endoplasmic reticulum membrane. The protein localises to the microsome membrane. It carries out the reaction an organic molecule + reduced [NADPH--hemoprotein reductase] + O2 = an alcohol + oxidized [NADPH--hemoprotein reductase] + H2O + H(+). Highly active in the 7-alpha-hydroxylation of testosterone, progesterone and androstenedione. In Rattus norvegicus (Rat), this protein is Cytochrome P450 2A1 (Cyp2a1).